Reading from the N-terminus, the 136-residue chain is Large-conductance mechanosensitive channel (136 aa).

Transmembrane regions (helical) follow at residues 9-29 (AFAS…GAAF) and 79-99 (IQTV…LKAI).

This sequence belongs to the MscL family. As to quaternary structure, homopentamer.

The protein localises to the cell inner membrane. Its function is as follows. Channel that opens in response to stretch forces in the membrane lipid bilayer. May participate in the regulation of osmotic pressure changes within the cell. The protein is Large-conductance mechanosensitive channel of Shewanella putrefaciens (strain CN-32 / ATCC BAA-453).